Reading from the N-terminus, the 153-residue chain is Prefoldin subunit alpha (153 aa).

Residues 126-153 are disordered; that stretch reads KRLEQGYRQAPGGSPVPHRHDHEDHDEE. Residues 143 to 153 show a composition bias toward basic and acidic residues; the sequence is HRHDHEDHDEE.

This sequence belongs to the prefoldin alpha subunit family. Heterohexamer of two alpha and four beta subunits.

It localises to the cytoplasm. Its function is as follows. Molecular chaperone capable of stabilizing a range of proteins. Seems to fulfill an ATP-independent, HSP70-like function in archaeal de novo protein folding. The sequence is that of Prefoldin subunit alpha from Methanoregula boonei (strain DSM 21154 / JCM 14090 / 6A8).